Reading from the N-terminus, the 145-residue chain is Regulator of sigma D (145 aa).

It belongs to the Rsd/AlgQ family. In terms of assembly, interacts with RpoD.

The protein resides in the cytoplasm. Binds RpoD and negatively regulates RpoD-mediated transcription activation by preventing the interaction between the primary sigma factor RpoD with the catalytic core of the RNA polymerase and with promoter DNA. May be involved in replacement of the RNA polymerase sigma subunit from RpoD to RpoS during the transition from exponential growth to the stationary phase. In Sodalis glossinidius (strain morsitans), this protein is Regulator of sigma D.